The sequence spans 426 residues: D-tagatose-1,6-bisphosphate aldolase subunit KbaZ (426 aa).

It belongs to the GatZ/KbaZ family. KbaZ subfamily. As to quaternary structure, forms a complex with KbaY.

It functions in the pathway carbohydrate metabolism; D-tagatose 6-phosphate degradation; D-glyceraldehyde 3-phosphate and glycerone phosphate from D-tagatose 6-phosphate: step 2/2. In terms of biological role, component of the tagatose-1,6-bisphosphate aldolase KbaYZ that is required for full activity and stability of the Y subunit. Could have a chaperone-like function for the proper and stable folding of KbaY. When expressed alone, KbaZ does not show any aldolase activity. The sequence is that of D-tagatose-1,6-bisphosphate aldolase subunit KbaZ from Escherichia coli O1:K1 / APEC.